Here is a 232-residue protein sequence, read N- to C-terminus: Ribose-5-phosphate isomerase A (232 aa).

Substrate is bound by residues 28 to 31 (TGST), 83 to 86 (DGAD), and 96 to 99 (KGGG). Glutamate 105 acts as the Proton acceptor in catalysis. Residue lysine 123 participates in substrate binding.

It belongs to the ribose 5-phosphate isomerase family. As to quaternary structure, homodimer.

It catalyses the reaction aldehydo-D-ribose 5-phosphate = D-ribulose 5-phosphate. It participates in carbohydrate degradation; pentose phosphate pathway; D-ribose 5-phosphate from D-ribulose 5-phosphate (non-oxidative stage): step 1/1. Catalyzes the reversible conversion of ribose-5-phosphate to ribulose 5-phosphate. This is Ribose-5-phosphate isomerase A from Allorhizobium ampelinum (strain ATCC BAA-846 / DSM 112012 / S4) (Agrobacterium vitis (strain S4)).